The primary structure comprises 206 residues: Small ribosomal subunit protein uS4 (206 aa).

The 61-residue stretch at N96–K156 folds into the S4 RNA-binding domain.

Belongs to the universal ribosomal protein uS4 family. In terms of assembly, part of the 30S ribosomal subunit. Contacts protein S5. The interaction surface between S4 and S5 is involved in control of translational fidelity.

Its function is as follows. One of the primary rRNA binding proteins, it binds directly to 16S rRNA where it nucleates assembly of the body of the 30S subunit. In terms of biological role, with S5 and S12 plays an important role in translational accuracy. This chain is Small ribosomal subunit protein uS4, found in Buchnera aphidicola subsp. Baizongia pistaciae (strain Bp).